We begin with the raw amino-acid sequence, 1205 residues long: MGDMANNSVAYSGVKNAVKEANHGEFGVTLAELRSLMELRATDALHKIQECYGDVQGICTKLKTSPNEGLSGNPADIERREAVFGKNFIPPKKPKTFLQLVWEALQDVTLIILEIAAVVSLGLSFYQPPGGNEALCGSVNVGEEEEESEAGWIEGAAILLSVVCVVLVTAFNDWSKEKQFRGLQSRIEQEQKFTVIRGGQVIQIPVADIIVGDIAQVKYGDLLPADGILIQGNDLKIDESSLTGESDHVKKSLDRDPMLLSGTHVMEGSGRMVVTAVGVNSQTGIIFTLLGAGGDEEEKEKEKKDKKTKAQDGAAMEMQPLKSEDGVDGDEKDKKRSNLPKKEKSVLQGKLTKLAVQIGKAGLLMSAITVIILVLYFVIDTSWVQKRPWLAECTPIYIQYFVKFFIIGVTVLVVAVPEGLPLAVTISLAYSVKKMMRDNNLVRHLDACETMGNATAICSDKTGTLTMNRMTVVQAYISEKHYKKIPAPEAIPENIMAYLVTGISVNCAYTSKILPPEKEGGLPRHVGNKTECALLGFLLDLKRDYQDVRNEIPEEKLHKVYTFNSVRKSMSTVLKNSDGSFRIFSKGASEIVLKKCFKILSADGEPKVFRPRDRDDIVKTVIEPMASEGLRTICLAFRDFPAGEPEPEWDNENDIVTGLTCIAVVGIEDPVRPEVPDAIKKCQRAGITVRMVTGDNINTARAIALKCGILNPGEDFLCLEGKDFNRRIRNEKGEIEQERIDKIWPKLRVLARSSPTDKHTLVKGIIDSTIFDQRQVVAVTGDGTNDGPALKKADVGFAMGIAGTDVAKEASDIILTDDNFTSIVKAVMWGRNVYDSISKFLQFQLTVNVVAVIVAFTGACITQDSPLKAVQMLWVNLIMDTLASLALATEPPTEALLLRKPYGRNKPLISRTMMKNILGHAFYQLVVVFTLLFAGEKIFDIDSGRNAPLHAPPSEHYTIVFNTFVMMQLFNEINARKIHGERNVFEGIFNNAIFCTIVLGTFVVQIIIVQFGGKPFSCSKLSIEQWLWSVFLGMGTLLWGQLISTIPTSRLKFLKEAGHGTQKEEIPEEELAEDVEEIDHAERELRRGQILWFRGLNRIQTQIRVVNAFRSSLYEGLEKPETRSSIHNFMTHPEFRIEDSEPHIPLIDDTDAEDDAPTKRNSTPPPSPNKNNNAVDSGIHLTTDMNKSATSSSPGSPLHSLETSL.

The Cytoplasmic portion of the chain corresponds to 2-104 (GDMANNSVAY…KTFLQLVWEA (103 aa)). The segment at 94 to 111 (PKTFLQLVWEALQDVTLI) is calmodulin-binding subdomain A. A helical transmembrane segment spans residues 105–125 (LQDVTLIILEIAAVVSLGLSF). Topologically, residues 126 to 153 (YQPPGGNEALCGSVNVGEEEEESEAGWI) are extracellular. The chain crosses the membrane as a helical span at residues 154 to 174 (EGAAILLSVVCVVLVTAFNDW). The Cytoplasmic portion of the chain corresponds to 175 to 351 (SKEKQFRGLQ…KEKSVLQGKL (177 aa)). The segment at 296 to 343 (EEEKEKEKKDKKTKAQDGAAMEMQPLKSEDGVDGDEKDKKRSNLPKKE) is disordered. 2 stretches are compositionally biased toward basic and acidic residues: residues 300-310 (EKEKKDKKTKA) and 322-343 (KSED…PKKE). Residues 352-371 (TKLAVQIGKAGLLMSAITVI) traverse the membrane as a helical segment. Topologically, residues 372–403 (ILVLYFVIDTSWVQKRPWLAECTPIYIQYFVK) are extracellular. Residues 404-424 (FFIIGVTVLVVAVPEGLPLAV) traverse the membrane as a helical segment. The Cytoplasmic segment spans residues 425–840 (TISLAYSVKK…RNVYDSISKF (416 aa)). Asp460 (4-aspartylphosphate intermediate) is an active-site residue. Residues Asp460, Thr462, and Asp782 each contribute to the Mg(2+) site. The helical transmembrane segment at 841 to 861 (LQFQLTVNVVAVIVAFTGACI) threads the bilayer. Residues 862–868 (TQDSPLK) are Extracellular-facing. The chain crosses the membrane as a helical span at residues 869 to 889 (AVQMLWVNLIMDTLASLALAT). Residues 890–912 (EPPTEALLLRKPYGRNKPLISRT) lie on the Cytoplasmic side of the membrane. A helical membrane pass occupies residues 913-933 (MMKNILGHAFYQLVVVFTLLF). The Extracellular segment spans residues 934–956 (AGEKIFDIDSGRNAPLHAPPSEH). A helical membrane pass occupies residues 957 to 976 (YTIVFNTFVMMQLFNEINAR). At 977-990 (KIHGERNVFEGIFN) the chain is on the cytoplasmic side. The helical transmembrane segment at 991–1012 (NAIFCTIVLGTFVVQIIIVQFG) threads the bilayer. Residues 1013–1024 (GKPFSCSKLSIE) are Extracellular-facing. Residues 1025–1045 (QWLWSVFLGMGTLLWGQLIST) form a helical membrane-spanning segment. The Cytoplasmic segment spans residues 1046-1205 (IPTSRLKFLK…SPLHSLETSL (160 aa)). A Phosphothreonine; by PKC modification is found at Thr1101. The interval 1145-1205 (PLIDDTDAED…SPLHSLETSL (61 aa)) is disordered. Polar residues predominate over residues 1183-1205 (TDMNKSATSSSPGSPLHSLETSL).

Belongs to the cation transport ATPase (P-type) (TC 3.A.3) family. Type IIB subfamily.

The protein localises to the cell membrane. It carries out the reaction Ca(2+)(in) + ATP + H2O = Ca(2+)(out) + ADP + phosphate + H(+). Functionally, catalyzes the hydrolysis of ATP coupled with the transport of calcium from the cytoplasm to the extracellular space thereby maintaining intracellular calcium homeostasis. This chain is Plasma membrane calcium-transporting ATPase 1, found in Gallus gallus (Chicken).